The chain runs to 291 residues: 33 kDa chaperonin (291 aa).

Cystine bridges form between C237/C239 and C270/C273.

This sequence belongs to the HSP33 family. In terms of processing, under oxidizing conditions two disulfide bonds are formed involving the reactive cysteines. Under reducing conditions zinc is bound to the reactive cysteines and the protein is inactive.

It localises to the cytoplasm. Functionally, redox regulated molecular chaperone. Protects both thermally unfolding and oxidatively damaged proteins from irreversible aggregation. Plays an important role in the bacterial defense system toward oxidative stress. This is 33 kDa chaperonin from Bacillus anthracis (strain A0248).